The chain runs to 631 residues: 1-deoxy-D-xylulose-5-phosphate synthase (631 aa).

Residues His-87 and 128 to 130 (GHS) each bind thiamine diphosphate. Asp-159 provides a ligand contact to Mg(2+). Residues 160 to 161 (GA), Asn-188, Phe-295, and Glu-378 each bind thiamine diphosphate. Asn-188 lines the Mg(2+) pocket.

Belongs to the transketolase family. DXPS subfamily. As to quaternary structure, homodimer. Requires Mg(2+) as cofactor. The cofactor is thiamine diphosphate.

It carries out the reaction D-glyceraldehyde 3-phosphate + pyruvate + H(+) = 1-deoxy-D-xylulose 5-phosphate + CO2. It functions in the pathway metabolic intermediate biosynthesis; 1-deoxy-D-xylulose 5-phosphate biosynthesis; 1-deoxy-D-xylulose 5-phosphate from D-glyceraldehyde 3-phosphate and pyruvate: step 1/1. In terms of biological role, catalyzes the acyloin condensation reaction between C atoms 2 and 3 of pyruvate and glyceraldehyde 3-phosphate to yield 1-deoxy-D-xylulose-5-phosphate (DXP). This is 1-deoxy-D-xylulose-5-phosphate synthase from Pseudomonas syringae pv. tomato (strain ATCC BAA-871 / DC3000).